Reading from the N-terminus, the 402-residue chain is Tyrosine--tRNA ligase (402 aa).

Positions 47–56 (PTAPDLHLGH) match the 'HIGH' region motif. The 'KMSKS' region signature appears at 232–236 (KMSKS). Lysine 235 contributes to the ATP binding site. Residues 341–401 (VGVLDVLKQI…GKKRFMKLNI (61 aa)) form the S4 RNA-binding domain.

It belongs to the class-I aminoacyl-tRNA synthetase family. TyrS type 2 subfamily. Homodimer.

The protein localises to the cytoplasm. It carries out the reaction tRNA(Tyr) + L-tyrosine + ATP = L-tyrosyl-tRNA(Tyr) + AMP + diphosphate + H(+). Functionally, catalyzes the attachment of tyrosine to tRNA(Tyr) in a two-step reaction: tyrosine is first activated by ATP to form Tyr-AMP and then transferred to the acceptor end of tRNA(Tyr). This chain is Tyrosine--tRNA ligase, found in Helicobacter pylori (strain J99 / ATCC 700824) (Campylobacter pylori J99).